The chain runs to 28 residues: N-acetyl-D-galactosamine-binding lectin subunit A (28 aa).

The protein belongs to the ribosome-inactivating protein family. As to quaternary structure, disulfide-linked heterodimer of A and B chains.

The catalysed reaction is Endohydrolysis of the N-glycosidic bond at one specific adenosine on the 28S rRNA.. Gal / GalNAc-specific lectin. Agglutinates both native and trypsin-treated rabbit erythrocytes but not human erythrocytes irrespective of blood group type. The sequence is that of N-acetyl-D-galactosamine-binding lectin subunit A from Iris hollandica (Dutch iris).